Reading from the N-terminus, the 479-residue chain is MGPGGTCPWSSRLSGFRVRTWIEPVVASTQVAGSLYDAGLLLVVKESFKSEAGGSSNYSANQSLVEYQEDQQQKAISNFNIIYNLVLGLTPLLSAYGLGWLSDRYHRKISICTAMLGFLLSRIGLLLKVMLDWPVEVMYGAAALNGLCGSFSAYWSGVMALGSLGCSEGRRSVRLILIDLVLGLAGFSGSMASGHLFKQIVGHSAQGLLLTACSVGCAAFALFYSLFVLKVPESKPNKVHPTVDTVSGMMGTYRTLDPDQQDKQNVPRNPRTPGKGKSSQREVVALLFVGAIIYDLAAVGTVDVMALFVLKEPLHWNQVQLGYGMASGYIIFITSFLGVLVFSRCFRDTTMIIIGMLSFGSGALLLAFVKETYMFYIARAIMLFALIPITTIRSAMSKLIKDSSYGKIFVILQLCLTLTGVVTSTIYNKIYQLTLDKFIGTCFVLSSFLSFLAIVPIGVVAYKQVPRSQQGECAEKQRS.

Residues Met1–Glu23 are Cytoplasmic-facing. Residues Pro24 to Val44 traverse the membrane as a helical segment. Topologically, residues Lys45–Asn80 are extracellular. 2 N-linked (GlcNAc...) asparagine glycosylation sites follow: Asn57 and Asn61. A helical transmembrane segment spans residues Ile81–Leu101. Over Ser102–Ser110 the chain is Cytoplasmic. A helical membrane pass occupies residues Ile111–Leu131. At Asp132 to Gly140 the chain is on the extracellular side. Residues Ala141 to Leu161 traverse the membrane as a helical segment. Residues Gly162–Arg174 lie on the Cytoplasmic side of the membrane. A helical membrane pass occupies residues Leu175–His195. At Leu196 to Gly207 the chain is on the extracellular side. The chain crosses the membrane as a helical span at residues Leu208 to Val228. Residues Leu229 to Arg281 are Cytoplasmic-facing. Residues Thr255–Lys277 form a disordered region. The helical transmembrane segment at Glu282–Val302 threads the bilayer. At Asp303–Leu321 the chain is on the extracellular side. The helical transmembrane segment at Gly322–Phe342 threads the bilayer. Over Ser343 to Asp348 the chain is Cytoplasmic. A helical transmembrane segment spans residues Thr349–Val369. Topologically, residues Lys370–Glu371 are extracellular. Residues Thr372–Ile392 form a helical membrane-spanning segment. The Cytoplasmic portion of the chain corresponds to Arg393 to Lys407. The helical transmembrane segment at Ile408–Asn428 threads the bilayer. Over Lys429–Thr441 the chain is Extracellular. Residues Cys442–Tyr462 form a helical membrane-spanning segment. Residues Lys463–Ser479 are Cytoplasmic-facing.

It belongs to the major facilitator superfamily. SLC46A family. In terms of processing, glycosylated. Expressed on cortical epithelial cells in the thymus. Mainly expressed in the thymic cortex and is highly enriched in SCID thymus. Also expressed in lymph nodes, heart, fetal liver, brain, spleen, intestine and kidney, but not in adult liver, skin, skeletal muscle and lung. Expressed in skin epidermis.

The protein resides in the endosome membrane. Its subcellular location is the cell membrane. It catalyses the reaction N-acetyl-beta-D-glucosaminyl-(1-&gt;4)-1,6-anhydro-N-acetyl-beta-D-muramoyl-L-alanyl-gamma-D-glutamyl-meso-2,6-diaminopimeloyl-D-alanine(out) + n H(+)(out) = N-acetyl-beta-D-glucosaminyl-(1-&gt;4)-1,6-anhydro-N-acetyl-beta-D-muramoyl-L-alanyl-gamma-D-glutamyl-meso-2,6-diaminopimeloyl-D-alanine(in) + n H(+)(in). It carries out the reaction L-alanyl-gamma-D-glutamyl-meso-2,6-diaminopimelate(out) + n H(+)(out) = L-alanyl-gamma-D-glutamyl-meso-2,6-diaminopimelate(in) + n H(+)(in). The catalysed reaction is N-acetyl-D-muramoyl-L-alanyl-D-isoglutamine(out) + n H(+)(out) = N-acetyl-D-muramoyl-L-alanyl-D-isoglutamine(in) + n H(+)(in). The enzyme catalyses 2',3'-cGAMP(out) + n H(+)(out) = 2',3'-cGAMP(in) + n H(+)(in). It catalyses the reaction 3',3'-cGAMP(out) + n H(+)(out) = 3',3'-cGAMP(in) + n H(+)(in). Down-regulated by the anti-inflammatory drug methotrexate. Functionally, proton-coupled transporter that delivers pathogen-associated or danger-associated molecular patterns to cytosolic pattern recognition receptors as part of the innate immune response to microbes or tissue injury. Has selectivity toward muropeptides that contain the amino acid diaminopimelic acid (DAP-type peptidoglycan muropeptides) including Tri-DAP and tracheal toxin (TCT), common in Gram-negative bacteria and Gram-positive bacilli. In the context of immune recognition of skin microbiota, shuttles bacterial muropeptides across the endolysosomal membranes into the cytosol for recognition by NOD1, triggering MYD88-dependent secretion of IL1A and neutrophil recruitment in a pyroptosis-type inflammatory process. To a lesser extent and redundantly, transports muramyl dipeptides derived from most bacterial proteoglycans, eliciting NOD2 receptor activation and downstream inflammatory responses. Postulated to function as an importer of cyclic GMP-AMP dinucleotides (cGAMPs) in monocyte and macrophage cell lineages. Selectively imports cGAMPs derived from pathogenic bacteria such as 3'3'-cGAMP thus providing for differential immune recognition of pathogenic versus commensal bacteria. During tumorigenesis may transport extracellular tumor-derived 2'3'-cGAMP across the plasma membrane of M1-polarized macrophages to activate the anti-tumoral stimulator of interferon genes (STING) pathway. The transport mechanism, its electrogenicity and stoichiometry remain to be elucidated. The protein is Solute carrier family 46 member 2 of Mus musculus (Mouse).